The following is a 116-amino-acid chain: S-adenosylmethionine decarboxylase proenzyme (116 aa).

Ser-63 functions as the Schiff-base intermediate with substrate; via pyruvic acid in the catalytic mechanism. Ser-63 is modified (pyruvic acid (Ser); by autocatalysis). The Proton acceptor; for processing activity role is filled by His-68. The active-site Proton donor; for catalytic activity is the Cys-83.

It belongs to the prokaryotic AdoMetDC family. Type 1 subfamily. Heterotetramer of two alpha and two beta chains arranged as a dimer of alpha/beta heterodimers. Requires pyruvate as cofactor. In terms of processing, is synthesized initially as an inactive proenzyme. Formation of the active enzyme involves a self-maturation process in which the active site pyruvoyl group is generated from an internal serine residue via an autocatalytic post-translational modification. Two non-identical subunits are generated from the proenzyme in this reaction, and the pyruvate is formed at the N-terminus of the alpha chain, which is derived from the carboxyl end of the proenzyme. The post-translation cleavage follows an unusual pathway, termed non-hydrolytic serinolysis, in which the side chain hydroxyl group of the serine supplies its oxygen atom to form the C-terminus of the beta chain, while the remainder of the serine residue undergoes an oxidative deamination to produce ammonia and the pyruvoyl group blocking the N-terminus of the alpha chain.

It catalyses the reaction S-adenosyl-L-methionine + H(+) = S-adenosyl 3-(methylsulfanyl)propylamine + CO2. It functions in the pathway amine and polyamine biosynthesis; S-adenosylmethioninamine biosynthesis; S-adenosylmethioninamine from S-adenosyl-L-methionine: step 1/1. Catalyzes the decarboxylation of S-adenosylmethionine to S-adenosylmethioninamine (dcAdoMet), the propylamine donor required for the synthesis of the polyamines spermine and spermidine from the diamine putrescine. The polypeptide is S-adenosylmethionine decarboxylase proenzyme (Clostridium botulinum (strain Okra / Type B1)).